The chain runs to 455 residues: ATP-dependent protease ATPase subunit HslU (455 aa).

ATP contacts are provided by residues Val-23, 65 to 70 (GVGKTE), Asp-266, Glu-333, and Arg-405.

It belongs to the ClpX chaperone family. HslU subfamily. As to quaternary structure, a double ring-shaped homohexamer of HslV is capped on each side by a ring-shaped HslU homohexamer. The assembly of the HslU/HslV complex is dependent on binding of ATP.

It localises to the cytoplasm. In terms of biological role, ATPase subunit of a proteasome-like degradation complex; this subunit has chaperone activity. The binding of ATP and its subsequent hydrolysis by HslU are essential for unfolding of protein substrates subsequently hydrolyzed by HslV. HslU recognizes the N-terminal part of its protein substrates and unfolds these before they are guided to HslV for hydrolysis. The polypeptide is ATP-dependent protease ATPase subunit HslU (Xanthomonas campestris pv. campestris (strain 8004)).